Here is a 1099-residue protein sequence, read N- to C-terminus: MSSQTKFKKDKEIIAEYEAQIKEIRTQLVEQFKCLEQQSESRLQLLQDLQEFFRRKAEIELEYSRSLEKLAERFSSKIRSSREHQFKKDQYLLSPVNCWYLVLHQTRRESRDHATLNDIFMNNVIVRLSQISEDVIRLFKKSKEIGLQMHEELLKVTNELYTVMKTYHMYHAESISAESKLKEAEKQEEKQFNKSGELSMNLLRHEDRPQRRSSVKKIEKMKEKRQAKYSENKLKCTKARNDYLLNLAATNAAISKYYIHDVSDLIDCCDLGFHASLARTFRTYLSAEYNLETSRHEGLDVIENAVDNLDSRSDKHTVMDMCSQVFCPPLKFEFQPHMGDEVCQVSAQQPVQTELLMRYHQLQSRLATLKIENEEVRKTLDATMQTLQDMLTVEDFDVSDAFQHSRSTESIKSAASETYMSKINIAKRRANQQETEMFYFTKFKEYVNGSNLITKLQAKHDLLKQTLGEGERAECGTTRPPCLPPKPQKMRRPRPLSVYSHKLFNGSMEAFIKDSGQAIPLVAESCIRFINLYGLQQQGIFRVPGSQVEVNDIKNSFERGEDPLVDDQNERDINSVAGVLKLYFRGLENPLFPKERFQDLISTIKLENPADRVHPIQQILITLPRVVIVVMRYLFAFLNHLSQYSDENMMDPYNLAICFGPTLMHIPDGQDPVSCQAHVNEVIKTIIIHHEAIFPSPRELEGPVYEKCMAGGEEYCDSPHSEPGTIDEVDHDNGTEPHTSDEEVEQIEAIAKFDYVGRSPRELSFKKGASLLLYHRASEDWWEGRHNGVDGLIPHQYIVVQDMDDAFSDSLSQKADSEASSGPLLDDKASSKNDLQSPTEHISDYGFGGVMGRVRLRSDGAAIPRRRSGGDTHSPPRGLGPSIDTPPRAAACPSSPHKIPLSRGRIESPEKRRMATFGSAGSINYPDKKALTEGLSMRSTCGSTRHSSLGDHKSLEAEALAEDIEKTMSTALHELRELERQNTVKQAPDVVLDTLEPLKNPPGPISSEPASPLHTIVIRDPDAAMRRSSSSSTEMMTTFKPALSARLAGAQLRPPPMRPVRPVVQHRSSSSSSSGVGSPAVTPTEKMFPNSSSDKSGTM.

The 296-residue stretch at 19 to 314 (AQIKEIRTQL…AVDNLDSRSD (296 aa)) folds into the F-BAR domain. Residues 352–392 (QTELLMRYHQLQSRLATLKIENEEVRKTLDATMQTLQDMLT) adopt a coiled-coil conformation. Residues 470 to 493 (GERAECGTTRPPCLPPKPQKMRRP) are disordered. One can recognise a Rho-GAP domain in the interval 506–694 (GSMEAFIKDS…TIIIHHEAIF (189 aa)). One can recognise an SH3 domain in the interval 744–803 (VEQIEAIAKFDYVGRSPRELSFKKGASLLLYHRASEDWWEGRHNGVDGLIPHQYIVVQDM). The span at 809-820 (DSLSQKADSEAS) shows a compositional bias: polar residues. The tract at residues 809 to 846 (DSLSQKADSEASSGPLLDDKASSKNDLQSPTEHISDYG) is disordered. Residues Ser-817, Ser-820, Ser-821, Ser-837, and Ser-858 each carry the phosphoserine modification. A disordered region spans residues 861 to 911 (AAIPRRRSGGDTHSPPRGLGPSIDTPPRAAACPSSPHKIPLSRGRIESPEK). Residues 952-987 (HKSLEAEALAEDIEKTMSTALHELRELERQNTVKQA) adopt a coiled-coil conformation. Residue Ser-954 is modified to Phosphoserine. Disordered stretches follow at residues 994-1014 (TLEP…SPLH) and 1045-1099 (ARLA…SGTM). Positions 1060–1074 (VRPVVQHRSSSSSSS) are enriched in low complexity. Over residues 1089–1099 (PNSSSDKSGTM) the composition is skewed to polar residues.

Homodimer. Forms a heterooligomer with SRGAP1 and SRGAP2 through its F-BAR domain. Interacts with WASF1. Probably interacts with ROBO1. Interacts with FASLG.

GTPase-activating protein for RAC1 and perhaps CDC42, but not for RhoA small GTPase. May attenuate RAC1 signaling in neurons. The polypeptide is SLIT-ROBO Rho GTPase-activating protein 3 (Srgap3) (Mus musculus (Mouse)).